The chain runs to 334 residues: MKKNQFLKESDVTAESVFFMKRRQVLKALGISAAALSLPHAAHADLLSWFKGNDRPPAPAGKPLEFSKPAAWQNNLPLTPADKVSGYNNFYEFGLDKADPAANAGSLKTDPWTLKISGEVAKPLTLDHDDLTRRFPLEERIYRMRCVEAWSMVVPWIGFPLHKLLALAEPTSNAKYVAFETIYAPEQMPGQQDRFIGGGLKYPYVEGLRLDEAMHPLTLMTVGVYGKALPPQNGAPVRLIVPWKYGFKGIKSIVSIKLTRERPPTTWNLAAPDEYGFYANVNPHVDHPRWSQATERFIGSGGILDVQRQPTLLFNGYADQVASLYRGLDLRENF.

Positions 1-44 (MKKNQFLKESDVTAESVFFMKRRQVLKALGISAAALSLPHAAHA) form a signal peptide, tat-type signal. Residues Asn88, 91-92 (YE), Cys146, Thr181, Asn233, Arg238, and 249-251 (GIK) each bind Mo-molybdopterin.

Belongs to the MsrP family. As to quaternary structure, heterodimer of a catalytic subunit (MsrP) and a heme-binding subunit (MsrQ). Requires Mo-molybdopterin as cofactor. Post-translationally, predicted to be exported by the Tat system. The position of the signal peptide cleavage has not been experimentally proven.

It is found in the periplasm. The catalysed reaction is L-methionyl-[protein] + a quinone + H2O = L-methionyl-(S)-S-oxide-[protein] + a quinol. It carries out the reaction L-methionyl-[protein] + a quinone + H2O = L-methionyl-(R)-S-oxide-[protein] + a quinol. Its function is as follows. Part of the MsrPQ system that repairs oxidized periplasmic proteins containing methionine sulfoxide residues (Met-O), using respiratory chain electrons. Thus protects these proteins from oxidative-stress damage caused by reactive species of oxygen and chlorine generated by the host defense mechanisms. MsrPQ is essential for the maintenance of envelope integrity under bleach stress, rescuing a wide series of structurally unrelated periplasmic proteins from methionine oxidation, including the primary periplasmic chaperone SurA and the lipoprotein Pal. The catalytic subunit MsrP is non-stereospecific, being able to reduce both (R-) and (S-) diastereoisomers of methionine sulfoxide. In Escherichia coli O81 (strain ED1a), this protein is Protein-methionine-sulfoxide reductase catalytic subunit MsrP.